Consider the following 489-residue polypeptide: MFSLQDLCRKHLFILPDVFGEHVLQRLGLYWRCHGSLQRIGDDHILIRRDLILSTNEALRMAGEEGNNEVVKLLLLWKGNLHYAVIGALQGDQYDLIHKYENQIGDFHFILPLIQDANTFEKCHALERFCGVSCLLKHATKYNMLPILQKYQEELSMRAYLHETLFELACLWQRYDVLKWIEQTMHVYDLKIMFNIAISKRDLTMYSLGYIFLFDRGNTEATLLTQHLEKTAAKGLLHFVLETLKYGGNIDTVLTQAVKYNHRKLLDYFLRQLPRKHIEKLLLLAVQEKASKKTLNLLLSHLNYSVKRIKKLLRYVIEYESTLVIKILLKKRVNLIDAMLEKMVRYFSATKVRTIMDELSISPERVIKMAIQKMRTDIVIHTSYVWEDDLERLTRLKNMVYTIKYEHGKKMLIKVMHGIYKNLLYGEREKVMFHLAKLYVAQNAATQFRDICKDCYKLDVARFKPRFKQLILDCLEIVTKNLAIVSWKS.

It belongs to the asfivirus MGF 505 family.

Functionally, plays a role in virus cell tropism, and may be required for efficient virus replication in macrophages. The chain is Protein MGF 505-2R from Ornithodoros (relapsing fever ticks).